Here is a 742-residue protein sequence, read N- to C-terminus: UPF0313 protein MA_4618 (742 aa).

Residues 1–125 (MGVRKQTMVK…SFSSSLPASK (125 aa)) form a disordered region. Residues 1-128 (MGVRKQTMVK…SSLPASKFLP (128 aa)) form a unknown region. Basic and acidic residues-rich tracts occupy residues 17–40 (ENKKFTREKKDKEKDKKPDRERAG) and 49–73 (KKVETGKKGKLGRKSEGKAEEKAEG). Residues 106-115 (TGKKEKKQKK) are compositionally biased toward basic residues. Residues 129–742 (MSPEEVKARG…KCLIRRKEKQ (614 aa)) form a UPF0313 region. The region spanning 438–707 (ALEMVKFSLT…AMQRALMHYR (270 aa)) is the Radical SAM core domain. 3 residues coordinate [4Fe-4S] cluster: C452, C456, and C459.

It in the C-terminal section; belongs to the UPF0313 family. The cofactor is [4Fe-4S] cluster.

The protein is UPF0313 protein MA_4618 of Methanosarcina acetivorans (strain ATCC 35395 / DSM 2834 / JCM 12185 / C2A).